The primary structure comprises 382 residues: RIB43A-like with coiled-coils protein 2 (382 aa).

Residues Asn222–Asp255 are a coiled coil.

The protein belongs to the RIB43A family. In terms of assembly, microtubule inner protein component of sperm flagellar doublet microtubules. Expressed in airway epithelial cells.

The protein localises to the cytoplasm. It is found in the cytoskeleton. The protein resides in the cilium axoneme. It localises to the flagellum axoneme. Functionally, microtubule inner protein (MIP) part of the dynein-decorated doublet microtubules (DMTs) in cilia axoneme, which is required for motile cilia beating. This Homo sapiens (Human) protein is RIB43A-like with coiled-coils protein 2.